The primary structure comprises 601 residues: MGSAALRCFCYGCLFTSVTWTLLLFIYFNFSEESQGFRHVPVKGLEPYKPLPKKIYPRFSRDSMGQHSDPRKGHNGNQLETEANADLSPELGMIFNEQDQDVRDVGYQKHAFNLLISNRLGYHRDVPDTRDSKCAKKTYPPDLPMASIVICFYNEAFSALLRTVHSVLDRTPAQLLHEIILVDDNSELDDLKKDLDGYMQENLSKKVKLVRNKQREGLIRGRMVGASHATGDVLVFLDSHCEVNEMWLQPLLAPIKENPRTVVCPVIDIISADTLIYSSSPVVRGGFNWGLHFKWDPVPLAELGGPEGFSAPFRSPTMAGGLFAMDREYFNMLGQYDSGMDIWGGENLEISFRIWMCGGSLLIVPCSRVGHIFRKRRPYGSPGGHDTMAHNSLRLAHVWMDEYKDQYFALRPELRNRDFGDIRERLALRRRLNCKSFKWYLDNIYPEMQVSGPNAKPQPPVFMNKGQKRPKILQRGRLINMQTNRCLVAQGHPSQKGGLVVAKECDYNDSEQVWSYNEEHELILSNLLCLDMSETRSSDPPRLMKCHGSGGSQQWVFGKSNRLYQVSVGQCLKLVDPMSRKGYVSMAICDGSPSQQWHLEN.

Over 1–7 (MGSAALR) the chain is Cytoplasmic. Residues 8–28 (CFCYGCLFTSVTWTLLLFIYF) form a helical; Signal-anchor for type II membrane protein membrane-spanning segment. N-linked (GlcNAc...) asparagine glycosylation is found at asparagine 29 and asparagine 202. Residues 29 to 601 (NFSEESQGFR…SPSQQWHLEN (573 aa)) are Lumenal-facing. The catalytic subdomain A stretch occupies residues 143-254 (LPMASIVICF…EMWLQPLLAP (112 aa)). Residues 312 to 374 (PFRSPTMAGG…PCSRVGHIFR (63 aa)) are catalytic subdomain B. Residues 469–600 (RPKILQRGRL…GSPSQQWHLE (132 aa)) form the Ricin B-type lectin domain. Residues cysteine 486 and cysteine 505 are joined by a disulfide bond. Asparagine 508 carries an N-linked (GlcNAc...) asparagine glycan. 2 disulfides stabilise this stretch: cysteine 529/cysteine 546 and cysteine 571/cysteine 589.

This sequence belongs to the glycosyltransferase 2 family. GalNAc-T subfamily. In terms of assembly, interacts with notch1. Mn(2+) is required as a cofactor. It depends on Ca(2+) as a cofactor.

It localises to the golgi apparatus membrane. It carries out the reaction L-seryl-[protein] + UDP-N-acetyl-alpha-D-galactosamine = a 3-O-[N-acetyl-alpha-D-galactosaminyl]-L-seryl-[protein] + UDP + H(+). The catalysed reaction is L-threonyl-[protein] + UDP-N-acetyl-alpha-D-galactosamine = a 3-O-[N-acetyl-alpha-D-galactosaminyl]-L-threonyl-[protein] + UDP + H(+). The protein operates within protein modification; protein glycosylation. Its function is as follows. Polypeptide N-acetylgalactosaminyltransferase that catalyzes the initiation of protein O-linked glycosylation and is involved in left/right asymmetry by mediating O-glycosylation of NOTCH1. O-glycosylation of NOTCH1 promotes activation of NOTCH1, modulating the balance between motile and immotile (sensory) cilia at the left-right organiser (LRO). Polypeptide N-acetylgalactosaminyltransferases catalyze the transfer of an N-acetyl-D-galactosamine residue to a serine or threonine residue on the protein receptor. The protein is Polypeptide N-acetylgalactosaminyltransferase 11 (galnt11) of Xenopus tropicalis (Western clawed frog).